The chain runs to 205 residues: Octanoyltransferase (205 aa).

Positions 30 to 205 (ERTADEIWLL…QALRARLGYA (176 aa)) constitute a BPL/LPL catalytic domain. Residues 69–76 (RGGQVTYH), 136–138 (SLG), and 149–151 (GLA) each bind substrate. The active-site Acyl-thioester intermediate is the Cys-167.

Belongs to the LipB family.

The protein localises to the cytoplasm. The enzyme catalyses octanoyl-[ACP] + L-lysyl-[protein] = N(6)-octanoyl-L-lysyl-[protein] + holo-[ACP] + H(+). It functions in the pathway protein modification; protein lipoylation via endogenous pathway; protein N(6)-(lipoyl)lysine from octanoyl-[acyl-carrier-protein]: step 1/2. In terms of biological role, catalyzes the transfer of endogenously produced octanoic acid from octanoyl-acyl-carrier-protein onto the lipoyl domains of lipoate-dependent enzymes. Lipoyl-ACP can also act as a substrate although octanoyl-ACP is likely to be the physiological substrate. The chain is Octanoyltransferase from Ectopseudomonas mendocina (strain ymp) (Pseudomonas mendocina).